We begin with the raw amino-acid sequence, 145 residues long: Large ribosomal subunit protein uL16 (145 aa).

This sequence belongs to the universal ribosomal protein uL16 family. As to quaternary structure, part of the 50S ribosomal subunit.

Binds 23S rRNA and is also seen to make contacts with the A and possibly P site tRNAs. This is Large ribosomal subunit protein uL16 from Exiguobacterium sibiricum (strain DSM 17290 / CCUG 55495 / CIP 109462 / JCM 13490 / 255-15).